A 374-amino-acid chain; its full sequence is Chorismate synthase (374 aa).

Residue arginine 55 coordinates NADP(+). FMN is bound by residues 132 to 134, glycine 293, 308 to 312, and arginine 335; these read RGS and KPTPS.

It belongs to the chorismate synthase family. FMNH2 is required as a cofactor.

The enzyme catalyses 5-O-(1-carboxyvinyl)-3-phosphoshikimate = chorismate + phosphate. It functions in the pathway metabolic intermediate biosynthesis; chorismate biosynthesis; chorismate from D-erythrose 4-phosphate and phosphoenolpyruvate: step 7/7. Its function is as follows. Catalyzes the anti-1,4-elimination of the C-3 phosphate and the C-6 proR hydrogen from 5-enolpyruvylshikimate-3-phosphate (EPSP) to yield chorismate, which is the branch point compound that serves as the starting substrate for the three terminal pathways of aromatic amino acid biosynthesis. This reaction introduces a second double bond into the aromatic ring system. This chain is Chorismate synthase, found in Methanothermobacter thermautotrophicus (strain ATCC 29096 / DSM 1053 / JCM 10044 / NBRC 100330 / Delta H) (Methanobacterium thermoautotrophicum).